The primary structure comprises 292 residues: UTP--glucose-1-phosphate uridylyltransferase (292 aa).

The protein belongs to the UDPGP type 2 family. Interacts with FloT.

Its subcellular location is the cell membrane. The protein resides in the membrane raft. The catalysed reaction is alpha-D-glucose 1-phosphate + UTP + H(+) = UDP-alpha-D-glucose + diphosphate. The protein operates within glycolipid metabolism; diglucosyl-diacylglycerol biosynthesis. Functionally, catalyzes the formation of UDP-glucose from glucose-1-phosphate and UTP. This is an intermediate step in the biosynthesis of diglucosyl-diacylglycerol (Glc2-DAG), i.e. the predominant glycolipid found in B.subtilis membrane, which is also used as a membrane anchor for lipoteichoic acid (LTA). Has a role in the biosynthesis of all phosphate-containing envelope polymers, since UDP-glucose serves as a glucosyl donor not only for the biosynthesis of LTA but also for wall teichoic acids (WTAs). Is required for biofilm formation. This is likely due to another role of UDP-glucose, which might also act as a metabolic signal regulating biofilm formation or may be involved in some unknown biosynthetic pathway essential for biofilm formation, e.g. the synthesis of an exopolysaccharide. This is UTP--glucose-1-phosphate uridylyltransferase (gtaB) from Bacillus subtilis (strain 168).